The chain runs to 574 residues: MKPINNHSFFRSLCGLSCISRLSVEEQCTRDYHRIWDDWAREGTTTENRIQAVRLLKICLDTREPVLNLSLLKLRSLPPLPLHIRELNISNNELISLPENSPLLTELHVNGNNLNILPTLPSQLIKLNISFNRNLSCLPSLPPYLQSLSARFNSLETLPELPSTLTILRIEGNRLTVLPELPHRLQELFVSGNRLQELPEFPQSLKYLKVGENQLRRLSRLPQELLALDVSNNLLTSLPENIITLPICTNVNISGNPLSTHVLQSLQRLTSSPDYHGPQIYFSMSDGQQNTLHRPLADAVTAWFPENKQSDVSQIWHAFEHEEHANTFSAFLDRLSDTVSARNTSGFREQVAAWLEKLSASAELRQQSFAVAADATESCEDRVALTWNNLRKTLLVHQASEGLFDNDTGALLSLGREMFRLEILEDIARDKVRTLHFVDEIEVYLAFQTMLAEKLQLSTAVKEMRFYGVSGVTANDLRTAEAMVRSREENEFTDWFSLWGPWHAVLKRTEADRWAQAEEQKYEMLENEYSQRVADRLKASGLSGDADAEREAGAQVMRETEQQIYRQLTDEVLA.

Residues 1 to 284 form an interaction with target proteins region; it reads MKPINNHSFF…YHGPQIYFSM (284 aa). 10 LRR repeats span residues 63 to 82, 83 to 104, 105 to 122, 123 to 143, 144 to 165, 166 to 183, 184 to 205, 206 to 223, 224 to 246, and 247 to 270; these read REPVLNLSLLKLRSLPPLPL, HIRELNISNNELISLPENSPLL, TELHVNGNNLNILPTLPS, QLIKLNISFNRNLSCLPSLPP, YLQSLSARFNSLETLPELPSTL, TILRIEGNRLTVLPELPH, RLQELFVSGNRLQELPEFPQSL, KYLKVGENQLRRLSRLPQ, ELLALDVSNNLLTSLPENIITLP, and ICTNVNISGNPLSTHVLQSLQRLT. The segment at 285–292 is linker; that stretch reads SDGQQNTL. The segment at 293-574 is E3 ubiquitin-protein ligase catalytic domain; the sequence is HRPLADAVTA…YRQLTDEVLA (282 aa). The NEL domain maps to 295–574; the sequence is PLADAVTAWF…YRQLTDEVLA (280 aa). The Glycyl thioester intermediate role is filled by C379.

This sequence belongs to the LRR-containing bacterial E3 ligase family. Ubiquitinated in the presence of host E1 ubiquitin-activating enzyme, E2 ubiquitin-conjugating enzyme and ubiquitin.

It is found in the secreted. The protein localises to the host cytoplasm. The catalysed reaction is S-ubiquitinyl-[E2 ubiquitin-conjugating enzyme]-L-cysteine + [acceptor protein]-L-lysine = [E2 ubiquitin-conjugating enzyme]-L-cysteine + N(6)-ubiquitinyl-[acceptor protein]-L-lysine.. Its function is as follows. Effector proteins function to alter host cell physiology and promote bacterial survival in host tissues. This protein is an E3 ubiquitin ligase that interferes with host's ubiquitination pathway. In Shigella flexneri, this protein is Probable E3 ubiquitin-protein ligase ipaH4.5 (ipaH4.5).